The primary structure comprises 175 residues: NAD(P)H-quinone oxidoreductase subunit J (175 aa).

It belongs to the complex I 30 kDa subunit family. NDH-1 can be composed of about 15 different subunits; different subcomplexes with different compositions have been identified which probably have different functions.

It is found in the cellular thylakoid membrane. It carries out the reaction a plastoquinone + NADH + (n+1) H(+)(in) = a plastoquinol + NAD(+) + n H(+)(out). The enzyme catalyses a plastoquinone + NADPH + (n+1) H(+)(in) = a plastoquinol + NADP(+) + n H(+)(out). In terms of biological role, NDH-1 shuttles electrons from an unknown electron donor, via FMN and iron-sulfur (Fe-S) centers, to quinones in the respiratory and/or the photosynthetic chain. The immediate electron acceptor for the enzyme in this species is believed to be plastoquinone. Couples the redox reaction to proton translocation, and thus conserves the redox energy in a proton gradient. Cyanobacterial NDH-1 also plays a role in inorganic carbon-concentration. This chain is NAD(P)H-quinone oxidoreductase subunit J, found in Nostoc sp. (strain PCC 7120 / SAG 25.82 / UTEX 2576).